We begin with the raw amino-acid sequence, 303 residues long: Probable WRKY transcription factor 30 (303 aa).

A disordered region spans residues 65-92; sequence DQVSQGGGSPKSDDSDQEPLVIKSSKKS. Positions 107–175 form a DNA-binding region, WRKY; it reads GVDRTLDDGF…YRGIHSCSQA (69 aa). The span at 266 to 278 shows a compositional bias: low complexity; the sequence is SGSASHSASNSPS. The interval 266–291 is disordered; sequence SGSASHSASNSPSTVPLESPFESYDP.

Belongs to the WRKY group III family. In terms of assembly, interacts with WRKY53, WRKY54 and WRKY70.

The protein localises to the nucleus. Functionally, transcription factor. Interacts specifically with the W box (5'-(T)TGAC[CT]-3'), a frequently occurring elicitor-responsive cis-acting element. This Arabidopsis thaliana (Mouse-ear cress) protein is Probable WRKY transcription factor 30.